The following is a 141-amino-acid chain: Hemoglobin subunit alpha-A (141 aa).

The 141-residue stretch at 1-141 (VLNAGDKANV…VGTVLTSKYR (141 aa)) folds into the Globin domain. H58 lines the O2 pocket. A heme b-binding site is contributed by H87.

Belongs to the globin family. In terms of assembly, heterotetramer of two alpha chains and two beta chains. Red blood cells.

Functionally, involved in oxygen transport from the lung to the various peripheral tissues. In Chrysemys picta bellii (Western painted turtle), this protein is Hemoglobin subunit alpha-A (HBAA).